A 302-amino-acid chain; its full sequence is Diacetylchitobiose uptake system permease protein NgcG (302 aa).

Transmembrane regions (helical) follow at residues 40 to 60 (LLILWSVIVIVPMLWVLMSSF), 99 to 119 (VIVVVSALILVMLLGAMCAYV), 131 to 151 (IYYVMLAGLTFPVFLAIVPLF), 166 to 186 (LILTYVAFALPFTMFFLYSFF), 221 to 241 (AAVAIFNFLGLWNQFLLPVAL), and 268 to 288 (GALFAAIVVTVVPVLLVYCVF). An ABC transmembrane type-1 domain is found at 95–288 (FLNSVIVVVS…VPVLLVYCVF (194 aa)).

Belongs to the binding-protein-dependent transport system permease family. As to quaternary structure, the complex is composed of two ATP-binding proteins (MsiK), two transmembrane proteins (NgcF and NgcG) and a solute-binding protein (NgcE).

The protein localises to the cell membrane. Part of the ABC transporter complex NgcEFG-MsiK involved in N,N'-diacetylchitobiose ((GlcNAc)2) uptake. Responsible for the translocation of the substrate across the membrane. This chain is Diacetylchitobiose uptake system permease protein NgcG, found in Streptomyces coelicolor (strain ATCC BAA-471 / A3(2) / M145).